Reading from the N-terminus, the 88-residue chain is Mitochondrial import inner membrane translocase subunit Tim10 (88 aa).

Positions 29–54 (CHRKCVPPHYKEAELSKGEAVCLDRC) match the Twin CX3C motif motif. 2 disulfide bridges follow: cysteine 29/cysteine 54 and cysteine 33/cysteine 50.

This sequence belongs to the small Tim family. As to quaternary structure, heterohexamer; composed of 3 copies of TIMM9 and 3 copies of TIMM10/TIM10A, named soluble 70 kDa complex. The complex forms a 6-bladed alpha-propeller structure and associates with the TIMM22 component of the TIM22 complex. Interacts with multi-pass transmembrane proteins in transit.

It is found in the mitochondrion inner membrane. Functionally, mitochondrial intermembrane chaperone that participates in the import and insertion of multi-pass transmembrane proteins into the mitochondrial inner membrane. May also be required for the transfer of beta-barrel precursors from the TOM complex to the sorting and assembly machinery (SAM complex) of the outer membrane. Acts as a chaperone-like protein that protects the hydrophobic precursors from aggregation and guide them through the mitochondrial intermembrane space. In Danio rerio (Zebrafish), this protein is Mitochondrial import inner membrane translocase subunit Tim10 (timm10).